We begin with the raw amino-acid sequence, 126 residues long: Glycine cleavage system H protein (126 aa).

The Lipoyl-binding domain occupies 22 to 104; the sequence is VAIIGITEYA…YEKAWMVKVE (83 aa). Lysine 63 is subject to N6-lipoyllysine.

This sequence belongs to the GcvH family. The glycine cleavage system is composed of four proteins: P, T, L and H. It depends on (R)-lipoate as a cofactor.

Functionally, the glycine cleavage system catalyzes the degradation of glycine. The H protein shuttles the methylamine group of glycine from the P protein to the T protein. Its function is as follows. Is also involved in protein lipoylation via its role as an octanoyl/lipoyl carrier protein intermediate. The polypeptide is Glycine cleavage system H protein (Staphylococcus aureus (strain USA300)).